Consider the following 270-residue polypeptide: Undecaprenyl-diphosphatase (270 aa).

The next 8 helical transmembrane spans lie at 1–21 (MDLFNAAILALIQGITEFLPI), 39–59 (QGLVFDIAANSGSLAAVMLYF), 87–107 (SHLVLQLALATIPVGLVGLAC), 114–134 (VARDPMIIATTSILFGLLLWW), 147–167 (ALSWRQVGIIGIAQAFALIPG), 193–213 (FLMAIPVGILAALLDLKDLFA), 223–243 (FLGVGFCVSGLSAYMVIHGLL), and 250–270 (TMTPFVVYRVVLGVVIFATLG).

Belongs to the UppP family.

It is found in the cell inner membrane. It carries out the reaction di-trans,octa-cis-undecaprenyl diphosphate + H2O = di-trans,octa-cis-undecaprenyl phosphate + phosphate + H(+). Its function is as follows. Catalyzes the dephosphorylation of undecaprenyl diphosphate (UPP). Confers resistance to bacitracin. In Magnetococcus marinus (strain ATCC BAA-1437 / JCM 17883 / MC-1), this protein is Undecaprenyl-diphosphatase.